The chain runs to 370 residues: Small ribosomal subunit biogenesis GTPase RsgA (370 aa).

The region spanning 111–270 is the CP-type G domain; the sequence is RSEGQILAAN…LIDTPGLRGV (160 aa). Residues 158–161 and 212–220 each bind GTP; these read TKAD and GQSGAGKST. Zn(2+) contacts are provided by C293, C298, H300, and C306.

Belongs to the TRAFAC class YlqF/YawG GTPase family. RsgA subfamily. In terms of assembly, monomer. Associates with 30S ribosomal subunit, binds 16S rRNA. Zn(2+) serves as cofactor.

The protein localises to the cytoplasm. Functionally, one of several proteins that assist in the late maturation steps of the functional core of the 30S ribosomal subunit. Helps release RbfA from mature subunits. May play a role in the assembly of ribosomal proteins into the subunit. Circularly permuted GTPase that catalyzes slow GTP hydrolysis, GTPase activity is stimulated by the 30S ribosomal subunit. The sequence is that of Small ribosomal subunit biogenesis GTPase RsgA from Streptomyces avermitilis (strain ATCC 31267 / DSM 46492 / JCM 5070 / NBRC 14893 / NCIMB 12804 / NRRL 8165 / MA-4680).